Consider the following 192-residue polypeptide: Urease accessory protein UreE (192 aa).

Residues 170-192 (EHHGHSHSHSHDHVHDEKCGHKH) are disordered. Basic and acidic residues predominate over residues 178-192 (HSHDHVHDEKCGHKH).

This sequence belongs to the UreE family.

Its subcellular location is the cytoplasm. Involved in urease metallocenter assembly. Binds nickel. Probably functions as a nickel donor during metallocenter assembly. The polypeptide is Urease accessory protein UreE (Cupriavidus necator (strain ATCC 17699 / DSM 428 / KCTC 22496 / NCIMB 10442 / H16 / Stanier 337) (Ralstonia eutropha)).